The sequence spans 339 residues: Ketol-acid reductoisomerase (NADP(+)) (339 aa).

The KARI N-terminal Rossmann domain maps to 1–182 (MRVYYDRDAD…GGGRSGIIET (182 aa)). NADP(+) is bound by residues 24-27 (YGSQ), R48, S51, S53, and 83-86 (DELQ). H108 is a catalytic residue. NADP(+) is bound at residue G134. A KARI C-terminal knotted domain is found at 183 to 328 (TFREECETDL…EKLRGMMPWI (146 aa)). Mg(2+) contacts are provided by D191, E195, E227, and E231. Residue S252 coordinates substrate.

Belongs to the ketol-acid reductoisomerase family. Mg(2+) serves as cofactor.

It carries out the reaction (2R)-2,3-dihydroxy-3-methylbutanoate + NADP(+) = (2S)-2-acetolactate + NADPH + H(+). It catalyses the reaction (2R,3R)-2,3-dihydroxy-3-methylpentanoate + NADP(+) = (S)-2-ethyl-2-hydroxy-3-oxobutanoate + NADPH + H(+). It participates in amino-acid biosynthesis; L-isoleucine biosynthesis; L-isoleucine from 2-oxobutanoate: step 2/4. It functions in the pathway amino-acid biosynthesis; L-valine biosynthesis; L-valine from pyruvate: step 2/4. In terms of biological role, involved in the biosynthesis of branched-chain amino acids (BCAA). Catalyzes an alkyl-migration followed by a ketol-acid reduction of (S)-2-acetolactate (S2AL) to yield (R)-2,3-dihydroxy-isovalerate. In the isomerase reaction, S2AL is rearranged via a Mg-dependent methyl migration to produce 3-hydroxy-3-methyl-2-ketobutyrate (HMKB). In the reductase reaction, this 2-ketoacid undergoes a metal-dependent reduction by NADPH to yield (R)-2,3-dihydroxy-isovalerate. The chain is Ketol-acid reductoisomerase (NADP(+)) from Magnetospirillum molischianum (Rhodospirillum molischianum).